Consider the following 161-residue polypeptide: Regulator of ribonuclease activity A (161 aa).

It belongs to the RraA family. As to quaternary structure, homotrimer. Binds to both RNA-binding sites in the C-terminal region of Rne and to RhlB.

The protein resides in the cytoplasm. Functionally, globally modulates RNA abundance by binding to RNase E (Rne) and regulating its endonucleolytic activity. Can modulate Rne action in a substrate-dependent manner by altering the composition of the degradosome. Modulates RNA-binding and helicase activities of the degradosome. This is Regulator of ribonuclease activity A from Edwardsiella ictaluri (strain 93-146).